The primary structure comprises 1763 residues: Collagen alpha-2(IV) chain (1763 aa).

The N-terminal stretch at 1-26 is a signal peptide; it reads MSSRLRIPLWLLLPTTALVYFVTTVS. Residues 27-42 are 7S domain; that stretch reads TQITCRDCTNRGCFCV. The interval 43 to 1529 is triple-helical region; that stretch reads GEKGSMGIPG…SGPPGPPGPS (1487 aa). Disordered stretches follow at residues 51–529 and 550–1529; these read PGPQ…PGPK and AGYA…PGPS. A compositionally biased stretch (low complexity) spans 72–81; it reads PGPKGQKGSQ. An N-linked (GlcNAc...) asparagine glycan is attached at N126. The span at 135-152 shows a compositional bias: pro residues; sequence PGLPGPPGMPGFPGPPGV. The span at 190–199 shows a compositional bias: basic and acidic residues; that stretch reads FPGEKGDRGD. The segment covering 206–217 has biased composition (pro residues); that stretch reads RGPPGEAGPPGN. Residues 225–235 show a composition bias toward low complexity; sequence PKGDPGEQGPR. The O-linked (Xyl...) (glycosaminoglycan) serine glycan is linked to A249. The span at 326-335 shows a compositional bias: low complexity; sequence DGLPGVPGLP. Residues 400 to 409 are compositionally biased toward gly residues; it reads GLPGGPGLPG. Composition is skewed to low complexity over residues 410 to 419 and 428 to 453; these read LPGLEGLPGP and IPGA…PGPR. Basic and acidic residues predominate over residues 466–481; it reads KDGRPGLDGLPGRKGE. Low complexity predominate over residues 564 to 582; the sequence is LPGIPGATGAPGDDGLPGA. Pro residues predominate over residues 583–592; the sequence is PGRPGPPGPP. Composition is skewed to low complexity over residues 699–714 and 731–783; these read DAGL…AVGP and KDGL…PGIP. Positions 810–832 are enriched in pro residues; the sequence is PGLPGPKGEPGPSTTGPPGPPGF. Composition is skewed to low complexity over residues 865-895, 946-977, 1040-1051, 1077-1086, 1108-1146, 1210-1231, 1280-1296, 1367-1386, 1462-1480, and 1499-1510; these read EIGL…KEGP, FPGQ…PGQK, PGLPGQPGLRGP, LMGEKGLPGL, PGLK…QPGL, PGFP…PGPR, LPGL…PGLK, PAGL…PGFP, LPGL…FAGA, and PGLPGFPGIEGI. A compositionally biased stretch (pro residues) spans 1511–1528; it reads PGPPGLPGPSGPPGPPGP. One can recognise a Collagen IV NC1 domain in the interval 1533–1756; that stretch reads GFLLVKHSQT…SRCQVCIRSP (224 aa). 6 disulfide bridges follow: C1548–C1637, C1581–C1634, C1593–C1599, C1656–C1752, C1690–C1749, and C1702–C1709.

This sequence belongs to the type IV collagen family. Trimers of two alpha 1(IV) and one alpha 2(IV) chain. Type IV collagen forms a mesh-like network linked through intermolecular interactions between 7S domains and between NC1 domains. Prolines at the third position of the tripeptide repeating unit (G-X-Y) are hydroxylated in some or all of the chains. In terms of processing, type IV collagens contain numerous cysteine residues which are involved in inter- and intramolecular disulfide bonding. 12 of these, located in the NC1 domain, are conserved in all known type IV collagens. Post-translationally, the trimeric structure of the NC1 domains is stabilized by covalent bonds between Lys and Met residues.

The protein resides in the secreted. The protein localises to the extracellular space. It is found in the extracellular matrix. Its subcellular location is the basement membrane. Its function is as follows. Collagen type IV is specific for basement membranes. This chain is Collagen alpha-2(IV) chain, found in Ascaris suum (Pig roundworm).